A 399-amino-acid polypeptide reads, in one-letter code: Elongation factor Tu (399 aa).

The tr-type G domain maps to Lys10 to Glu204. The G1 stretch occupies residues Gly19 to Thr26. Gly19 to Thr26 contributes to the GTP binding site. Residue Thr26 participates in Mg(2+) binding. Residues Gly60–Asn64 are G2. Positions Asp81–Gly84 are G3. GTP-binding positions include Asp81–His85 and Asn136–Asp139. Residues Asn136 to Asp139 are G4. A G5 region spans residues Ser174–Leu176.

It belongs to the TRAFAC class translation factor GTPase superfamily. Classic translation factor GTPase family. EF-Tu/EF-1A subfamily. As to quaternary structure, monomer.

Its subcellular location is the cytoplasm. It carries out the reaction GTP + H2O = GDP + phosphate + H(+). Functionally, GTP hydrolase that promotes the GTP-dependent binding of aminoacyl-tRNA to the A-site of ribosomes during protein biosynthesis. The sequence is that of Elongation factor Tu from Prochlorococcus marinus (strain MIT 9211).